We begin with the raw amino-acid sequence, 200 residues long: Recombination protein RecR (200 aa).

The C4-type zinc finger occupies 60–75 (CVYCQALTEDDVCNIC). In terms of domain architecture, Toprim spans 83 to 177 (TKLCIIESML…KISRIGFGVP (95 aa)).

The protein belongs to the RecR family.

Its function is as follows. May play a role in DNA repair. It seems to be involved in an RecBC-independent recombinational process of DNA repair. It may act with RecF and RecO. The chain is Recombination protein RecR from Francisella tularensis subsp. tularensis (strain WY96-3418).